The following is a 299-amino-acid chain: MLKSSKKEDSSKKNQNNKLIFTVRKLFSPIKNFFRKTKTPDNFFGVIKRLKINSQKMTLDERNILANLLELEDKTIEDIMVPRSDIAAIKLTTNLEELSESIKLEVPHTRTLIYDGTLDNVVGFIHIKDLFKALATKQNGRLKKLIRKHIIAAPSMKLLDLLAKMRRERTHIAIVVDEYGGTDGLVTIEDLIEEIVGRIDDEHDQQLDSDNFKVINNSTIISNARVEVEVLEEIIGEKLHNDYDEFDTIGGLVLTRVSSVPAIGTRIDISENIEIEVTDATPRSLKQVKIRLKNGLNGQ.

2 consecutive CBS domains span residues 80–142 and 145–202; these read MVPR…NGRL and LIRK…IDDE.

Belongs to the UPF0053 family. Hemolysin C subfamily.

This is Hemolysin C homolog (tlyC) from Rickettsia rickettsii (strain Sheila Smith).